The primary structure comprises 173 residues: Translation initiation factor IF-3 (173 aa).

It belongs to the IF-3 family. As to quaternary structure, monomer.

It localises to the cytoplasm. Functionally, IF-3 binds to the 30S ribosomal subunit and shifts the equilibrium between 70S ribosomes and their 50S and 30S subunits in favor of the free subunits, thus enhancing the availability of 30S subunits on which protein synthesis initiation begins. The protein is Translation initiation factor IF-3 of Methylorubrum populi (strain ATCC BAA-705 / NCIMB 13946 / BJ001) (Methylobacterium populi).